We begin with the raw amino-acid sequence, 517 residues long: MSAYRRPVALIVLDGWGLNPDPRANAVAMARHPNFDRLMARYPHTTLTASGEAVGLLPGQMGDSNVGHLNLGAGRIVYQTLVRIWRSIQDGSFYTLPVWRPVLDRAKQPGKALHLMGLVSDGGVHSHIDHLLALIDLAKRENVERVYVHAFLDGRDVPPQSALPYLERVEAKLKETGIGAIATISGRYYAMDRDKRWDRTEKAFLAITQGIGHTAGSVAEAVERAYARGETDEFVQPTVIEGVDGRVREGDGVIFFNFRPDRARQLVRALHETAFDGFKRPEGYRPVELVTMTQYDQTFTDIPVAFGPQFVDVPMGQVVAEAGLRQLRIAETEKYAHVTYFFNGGEERVFPGEERVLVPSPKVATYDLKPEMSAYEVAREAVKWIEEDRTDFIVLNFANPDMVGHTGVLEAAIRAVEAVDECLGQVVDALLAKGGAAVIIADHGNCDQMVDYETGAPHTNHTLNPVPCILVDDQRLDAKLKPGVLANVAPTLLEIIGLPKPPQMDADSLLVSNAEGA.

Residues D14 and S64 each coordinate Mn(2+). S64 serves as the catalytic Phosphoserine intermediate. Substrate-binding positions include H125, R155–D156, R187, R193, R259–R262, and K334. Residues D401, H405, D442, H443, and H461 each coordinate Mn(2+).

It belongs to the BPG-independent phosphoglycerate mutase family. As to quaternary structure, monomer. Mn(2+) is required as a cofactor.

It catalyses the reaction (2R)-2-phosphoglycerate = (2R)-3-phosphoglycerate. It participates in carbohydrate degradation; glycolysis; pyruvate from D-glyceraldehyde 3-phosphate: step 3/5. Catalyzes the interconversion of 2-phosphoglycerate and 3-phosphoglycerate. This chain is 2,3-bisphosphoglycerate-independent phosphoglycerate mutase, found in Symbiobacterium thermophilum (strain DSM 24528 / JCM 14929 / IAM 14863 / T).